The sequence spans 457 residues: ATP synthase subunit beta (457 aa).

147 to 154 (GGAGVGKT) is an ATP binding site.

This sequence belongs to the ATPase alpha/beta chains family. In terms of assembly, F-type ATPases have 2 components, CF(1) - the catalytic core - and CF(0) - the membrane proton channel. CF(1) has five subunits: alpha(3), beta(3), gamma(1), delta(1), epsilon(1). CF(0) has three main subunits: a(1), b(2) and c(9-12). The alpha and beta chains form an alternating ring which encloses part of the gamma chain. CF(1) is attached to CF(0) by a central stalk formed by the gamma and epsilon chains, while a peripheral stalk is formed by the delta and b chains.

Its subcellular location is the cell inner membrane. The catalysed reaction is ATP + H2O + 4 H(+)(in) = ADP + phosphate + 5 H(+)(out). Its function is as follows. Produces ATP from ADP in the presence of a proton gradient across the membrane. The catalytic sites are hosted primarily by the beta subunits. This chain is ATP synthase subunit beta, found in Histophilus somni (strain 129Pt) (Haemophilus somnus).